Reading from the N-terminus, the 113-residue chain is uncharacterized protein (113 aa).

A helical transmembrane segment spans residues 7-29; that stretch reads FFILIVLLFTVFSLKEFIPNTFC.

Its subcellular location is the membrane. This is an uncharacterized protein from Aquifex aeolicus (strain VF5).